The sequence spans 487 residues: E3 ubiquitin-protein ligase RNF8 (487 aa).

In terms of domain architecture, FHA spans Val38 to Leu92. The interval Gln68–Gly72 is required for interaction with PIWIL1. Disordered stretches follow at residues Met143–Ile176 and Glu182–Glu201. Residue Ser157 is modified to Phosphoserine. The RING-type zinc finger occupies Cys405–Arg443.

This sequence belongs to the RNF8 family. In terms of assembly, homodimer. Forms a E2-E3 ubiquitin ligase complex composed of the RNF8 homodimer and a E2 heterodimer of UBE2N and UBE2V2. Interacts with class III E2s, including UBE2E1, UBE2E2, and UBE2E3 and with UBE2N. Interacts with RXRA. Interacts (via FHA domain) with phosphorylated HERC2 (via C-terminus). Interacts with PIWIL1; leading to sequester RNF8 in the cytoplasm. Interacts with WRAP53/TCAB1. Post-translationally, autoubiquitinated through 'Lys-48' and 'Lys-63' of ubiquitin. 'Lys-63' polyubiquitination is mediated by UBE2N. 'Lys-29'-type polyubiquitination is also observed, but it doesn't require its own functional RING-type zinc finger.

It localises to the nucleus. It is found in the cytoplasm. Its subcellular location is the midbody. The protein localises to the chromosome. The protein resides in the telomere. It catalyses the reaction S-ubiquitinyl-[E2 ubiquitin-conjugating enzyme]-L-cysteine + [acceptor protein]-L-lysine = [E2 ubiquitin-conjugating enzyme]-L-cysteine + N(6)-ubiquitinyl-[acceptor protein]-L-lysine.. It participates in protein modification; protein ubiquitination. Functionally, E3 ubiquitin-protein ligase that plays a key role in DNA damage signaling via 2 distinct roles: by mediating the 'Lys-63'-linked ubiquitination of histones H2A and H2AX and promoting the recruitment of DNA repair proteins at double-strand breaks (DSBs) sites, and by catalyzing 'Lys-48'-linked ubiquitination to remove target proteins from DNA damage sites. Following DNA DSBs, it is recruited to the sites of damage by ATM-phosphorylated MDC1 and catalyzes the 'Lys-63'-linked ubiquitination of histones H2A and H2AX, thereby promoting the formation of TP53BP1 and BRCA1 ionizing radiation-induced foci (IRIF). Also controls the recruitment of UIMC1-BRCC3 (RAP80-BRCC36) and PAXIP1/PTIP to DNA damage sites. Promotes the recruitment of NBN to DNA damage sites by catalyzing 'Lys-6'-linked ubiquitination of NBN. Also recruited at DNA interstrand cross-links (ICLs) sites and catalyzes 'Lys-63'-linked ubiquitination of histones H2A and H2AX, leading to recruitment of FAAP20 and Fanconi anemia (FA) complex, followed by interstrand cross-link repair. H2A ubiquitination also mediates the ATM-dependent transcriptional silencing at regions flanking DSBs in cis, a mechanism to avoid collision between transcription and repair intermediates. Promotes the formation of 'Lys-63'-linked polyubiquitin chains via interactions with the specific ubiquitin-conjugating UBE2N/UBC13 and ubiquitinates non-histone substrates such as PCNA. Substrates that are polyubiquitinated at 'Lys-63' are usually not targeted for degradation. Also catalyzes the formation of 'Lys-48'-linked polyubiquitin chains via interaction with the ubiquitin-conjugating UBE2L6/UBCH8, leading to degradation of substrate proteins such as CHEK2, JMJD2A/KDM4A and KU80/XRCC5: it is still unclear how the preference toward 'Lys-48'- versus 'Lys-63'-linked ubiquitination is regulated but it could be due to RNF8 ability to interact with specific E2 specific ligases. For instance, interaction with phosphorylated HERC2 promotes the association between RNF8 and UBE2N/UBC13 and favors the specific formation of 'Lys-63'-linked ubiquitin chains. Promotes non-homologous end joining (NHEJ) by promoting the 'Lys-48'-linked ubiquitination and degradation the of KU80/XRCC5. Following DNA damage, mediates the ubiquitination and degradation of JMJD2A/KDM4A in collaboration with RNF168, leading to unmask H4K20me2 mark and promote the recruitment of TP53BP1 at DNA damage sites. Following DNA damage, mediates the ubiquitination and degradation of POLD4/p12, a subunit of DNA polymerase delta. In the absence of POLD4, DNA polymerase delta complex exhibits higher proofreading activity. In addition to its function in damage signaling, also plays a role in higher-order chromatin structure by mediating extensive chromatin decondensation. Involved in the activation of ATM by promoting histone H2B ubiquitination, which indirectly triggers histone H4 'Lys-16' acetylation (H4K16ac), establishing a chromatin environment that promotes efficient activation of ATM kinase. Required in the testis, where it plays a role in the replacement of histones during spermatogenesis. At uncapped telomeres, promotes the joining of deprotected chromosome ends by inducing H2A ubiquitination and TP53BP1 recruitment, suggesting that it may enhance cancer development by aggravating telomere-induced genome instability in case of telomeric crisis. Promotes the assembly of RAD51 at DNA DSBs in the absence of BRCA1 and TP53BP1 Also involved in class switch recombination in immune system, via its role in regulation of DSBs repair. May be required for proper exit from mitosis after spindle checkpoint activation and may regulate cytokinesis. May play a role in the regulation of RXRA-mediated transcriptional activity. Not involved in RXRA ubiquitination by UBE2E2. The chain is E3 ubiquitin-protein ligase RNF8 from Bos taurus (Bovine).